Here is a 183-residue protein sequence, read N- to C-terminus: Ran guanine nucleotide release factor (183 aa).

The segment at 23 to 66 (ELRQIPDNQEVFAHSQTDQSIIIELLEYQSQVQDADAARYHFED) is interaction with RAN.

It belongs to the MOG1 family. In terms of assembly, monomer. Interacts with ran.

It is found in the nucleus. It localises to the cytoplasm. The protein resides in the perinuclear region. Its subcellular location is the cell membrane. Its function is as follows. May regulate the intracellular trafficking of RAN. Promotes guanine nucleotide release from RAN and inhibits binding of new GTP. Plays a role in the regulation of the levels of GTP-bound RAN in the nucleus. Required for normal expression of the ion channel hcn4 and for normal expression of the cardiac transcription factors nkx2.5, gata4 and hand2 during embryonic development. Required for normal embryonic heart development and normal heart rate. The sequence is that of Ran guanine nucleotide release factor from Danio rerio (Zebrafish).